The sequence spans 256 residues: Ribosomal RNA large subunit methyltransferase E (256 aa).

S-adenosyl-L-methionine-binding residues include Gly-48, Trp-50, Asp-68, Asp-86, and Asp-111. Catalysis depends on Lys-151, which acts as the Proton acceptor. The TRAM domain maps to 198–256 (PVSPGDELDATVVDIGSEGDGIIKIDGYTLFVPGVENGDSVRVRVTDLKSNVGFAEVIE).

This sequence belongs to the class I-like SAM-binding methyltransferase superfamily. RNA methyltransferase RlmE family.

It is found in the cytoplasm. It carries out the reaction uridine(2552) in 23S rRNA + S-adenosyl-L-methionine = 2'-O-methyluridine(2552) in 23S rRNA + S-adenosyl-L-homocysteine + H(+). Specifically methylates the uridine in position 2552 of 23S rRNA at the 2'-O position of the ribose in the fully assembled 50S ribosomal subunit. This Haloquadratum walsbyi (strain DSM 16790 / HBSQ001) protein is Ribosomal RNA large subunit methyltransferase E.